The primary structure comprises 410 residues: Transcription termination factor, mitochondrial (410 aa).

A mitochondrion-targeting transit peptide spans 1 to 44 (MIRSLLRSFETALKLHAGLNMHPMHCSRRLLFSQYENRASPSRL).

Belongs to the mTERF family.

It is found in the mitochondrion. Transcription termination factor. Binds promoter DNA and regulates mitochondrial replication and transcription. Transcription termination activity may be polarized with highest termination activity occurring when its DNA-binding site is positioned in the reverse orientation with respect to the incoming RNA polymerase. Required for normal topology and maintenance of mitochondrial DNA (mtDNA) levels. Regulates mtDNA replication by promoting replication pausing, possibly by acting as a natural barrier to replication fork progression. Its function in replication pausing prevents unregulated replication that may occur for example by collisions between the machineries of DNA replication and transcription during mtDNA synthesis. This ensures the incorporation of RNA transcripts into replication intermediates at the replication fork and allow for proper fork progression. Shares mtDNA binding sites with the mitochondrial termination factor mTerf5 and thereby may antagonize mTerf5 function during replication to regulate pausing. Likely to function downstream of Dref which activates genes involved in mtDNA replication and maintenance. The chain is Transcription termination factor, mitochondrial from Drosophila melanogaster (Fruit fly).